We begin with the raw amino-acid sequence, 231 residues long: Demethylmenaquinone methyltransferase (231 aa).

Residues Thr62, Asp80, 102–103 (DA), and Ser119 each bind S-adenosyl-L-methionine.

It belongs to the class I-like SAM-binding methyltransferase superfamily. MenG/UbiE family.

It catalyses the reaction a 2-demethylmenaquinol + S-adenosyl-L-methionine = a menaquinol + S-adenosyl-L-homocysteine + H(+). It participates in quinol/quinone metabolism; menaquinone biosynthesis; menaquinol from 1,4-dihydroxy-2-naphthoate: step 2/2. Its function is as follows. Methyltransferase required for the conversion of demethylmenaquinol (DMKH2) to menaquinol (MKH2). The polypeptide is Demethylmenaquinone methyltransferase (Streptomyces avermitilis (strain ATCC 31267 / DSM 46492 / JCM 5070 / NBRC 14893 / NCIMB 12804 / NRRL 8165 / MA-4680)).